Consider the following 49-residue polypeptide: Large ribosomal subunit protein bL33B (49 aa).

It belongs to the bacterial ribosomal protein bL33 family.

The chain is Large ribosomal subunit protein bL33B from Lactobacillus gasseri (strain ATCC 33323 / DSM 20243 / BCRC 14619 / CIP 102991 / JCM 1131 / KCTC 3163 / NCIMB 11718 / NCTC 13722 / AM63).